Reading from the N-terminus, the 436-residue chain is MKGFMIAAPASGSGKTTVTLGLLRALKRRGEALAPVKAGPDYIDPAYHKAASGVDCFNLDPWAMRPELISALSSRMTESGARLLVAEGMMGLFDGAMDGKGSSADLARLLDLPVVLVVDCARQSHSIAALVWGFSQFRKDVLIAGIILNRVGSSRHEAMLRGALEPLRIPVLGALPRDTALSLPERHLGLVQAGEHSDLESFLEHAADTMETHIDLDALQTIWSRPKRFDAMANVPRLKPLGNHIAVARDDAFAFAYAHLFEGWRRRGVEISFFSPLGDESPRQDADAIYLPGGYPELHAGRLAQAGRFQAGIREAAARGVTVYGECGGYMVLGESLQDAEGVAHPMLGLLQLETSFAKRKLHLGYRVLEPLEGSPWTEPLKAHEFHYASIVREGKADRLFRVRDAVGDDVGEAGLRVGSVSGSFMHVIDFCGEKA.

Positions 244–435 (HIAVARDDAF…MHVIDFCGEK (192 aa)) constitute a GATase cobBQ-type domain. The active-site Nucleophile is the C327.

Belongs to the CobB/CbiA family. Mg(2+) serves as cofactor.

The enzyme catalyses hydrogenobyrinate + 2 L-glutamine + 2 ATP + 2 H2O = hydrogenobyrinate a,c-diamide + 2 L-glutamate + 2 ADP + 2 phosphate + 2 H(+). Its pathway is cofactor biosynthesis; adenosylcobalamin biosynthesis; cob(II)yrinate a,c-diamide from precorrin-2 (aerobic route): step 9/10. Functionally, catalyzes the ATP-dependent amidation of the two carboxylate groups at positions a and c of hydrogenobyrinate, using either L-glutamine or ammonia as the nitrogen source. In Brucella anthropi (strain ATCC 49188 / DSM 6882 / CCUG 24695 / JCM 21032 / LMG 3331 / NBRC 15819 / NCTC 12168 / Alc 37) (Ochrobactrum anthropi), this protein is Hydrogenobyrinate a,c-diamide synthase.